The primary structure comprises 445 residues: Aminopeptidase C (445 aa).

Residues Cys69, His363, and Asn385 contribute to the active site.

Belongs to the peptidase C1 family. Homohexamer.

The enzyme catalyses Inactivates bleomycin B2 (a cytotoxic glycometallopeptide) by hydrolysis of a carboxyamide bond of beta-aminoalanine, but also shows general aminopeptidase activity. The specificity varies somewhat with source, but amino acid arylamides of Met, Leu and Ala are preferred.. This is Aminopeptidase C (pepC) from Streptococcus thermophilus.